The primary structure comprises 387 residues: Phosphoglycerate kinase (387 aa).

Residues 21–23 (DLN), arginine 36, 59–62 (HLGR), arginine 113, and arginine 146 each bind substrate. ATP is bound by residues lysine 197, glutamate 314, and 340-343 (GGDT).

Belongs to the phosphoglycerate kinase family. Monomer.

It localises to the cytoplasm. The enzyme catalyses (2R)-3-phosphoglycerate + ATP = (2R)-3-phospho-glyceroyl phosphate + ADP. It functions in the pathway carbohydrate degradation; glycolysis; pyruvate from D-glyceraldehyde 3-phosphate: step 2/5. This is Phosphoglycerate kinase from Photorhabdus luminescens (Xenorhabdus luminescens).